The chain runs to 214 residues: Ribonuclease S-2 (214 aa).

The signal sequence occupies residues 1 to 22 (MSKSQLTSVFFILLCALSPIYG). Cys38 and Cys43 form a disulfide bridge. Asn49 carries N-linked (GlcNAc...) asparagine glycosylation. The active-site Proton donor is His53. His53 serves as a coordination point for RNA. Asn59 is a glycosylation site (N-linked (GlcNAc...) asparagine). The cysteines at positions 67 and 116 are disulfide-linked. RNA is bound by residues 91–92 (DL), Lys94, and Phe105. Glu109 is a catalytic residue. Residue 112–113 (KH) participates in RNA binding. Residue His113 is the Proton acceptor of the active site. Residue Asn160 is glycosylated (N-linked (GlcNAc...) asparagine). Disulfide bonds link Cys175–Cys204 and Cys187–Cys198.

It belongs to the RNase T2 family.

Its subcellular location is the secreted. The protein resides in the extracellular space. The enzyme catalyses a ribonucleotidyl-ribonucleotide-RNA + H2O = a 3'-end 3'-phospho-ribonucleotide-RNA + a 5'-end dephospho-ribonucleoside-RNA + H(+). In terms of biological role, self-incompatibility (SI) is the inherited ability of a flowering plant to prevent self-fertilization by discriminating between self and non-self pollen during pollination. In many species of the Solanaceae, self-incompatibility is controlled by the single, multiallelic locus S. This stylar glycoprotein is associated with expression of self-incompatibility in potato. This chain is Ribonuclease S-2 (S-2), found in Nicotiana alata (Winged tobacco).